Here is a 916-residue protein sequence, read N- to C-terminus: Protein translocase subunit SecA (916 aa).

Residues glutamine 87, 105–109 (GEGKT), and aspartate 507 each bind ATP. Residues cysteine 900, cysteine 902, cysteine 911, and histidine 912 each contribute to the Zn(2+) site.

It belongs to the SecA family. As to quaternary structure, monomer and homodimer. Part of the essential Sec protein translocation apparatus which comprises SecA, SecYEG and auxiliary proteins SecDF-YajC and YidC. Zn(2+) is required as a cofactor.

Its subcellular location is the cell inner membrane. It localises to the cytoplasm. The enzyme catalyses ATP + H2O + cellular proteinSide 1 = ADP + phosphate + cellular proteinSide 2.. In terms of biological role, part of the Sec protein translocase complex. Interacts with the SecYEG preprotein conducting channel. Has a central role in coupling the hydrolysis of ATP to the transfer of proteins into and across the cell membrane, serving both as a receptor for the preprotein-SecB complex and as an ATP-driven molecular motor driving the stepwise translocation of polypeptide chains across the membrane. This chain is Protein translocase subunit SecA, found in Neisseria meningitidis serogroup A / serotype 4A (strain DSM 15465 / Z2491).